The sequence spans 334 residues: Chemotactic signal transduction system substrate-binding protein CosB (334 aa).

An N-terminal signal peptide occupies residues 1 to 29 (MMDTPEHASTSSRRQLLGMLAAGGTTAVA).

It belongs to the OsmX family.

Its subcellular location is the cell membrane. In terms of biological role, mediates chemotaxis towards compatible osmolytes. May function as a receptor that binds the osmolytes and transduces a signal to CosT. Has probably no additional role in transport. This is Chemotactic signal transduction system substrate-binding protein CosB (cosB) from Halobacterium salinarum (strain ATCC 29341 / DSM 671 / R1).